We begin with the raw amino-acid sequence, 462 residues long: Siroheme synthase (462 aa).

Residues 1 to 203 (MQYFPIFVDT…GNNSKAEQMM (203 aa)) are precorrin-2 dehydrogenase /sirohydrochlorin ferrochelatase. Residues 22–23 (EV) and 43–44 (PW) contribute to the NAD(+) site. S128 carries the phosphoserine modification. Positions 217–462 (GEVYLVGAGP…EKLNWFGADA (246 aa)) are uroporphyrinogen-III C-methyltransferase. An S-adenosyl-L-methionine-binding site is contributed by P226. Catalysis depends on D249, which acts as the Proton acceptor. Catalysis depends on K271, which acts as the Proton donor. S-adenosyl-L-methionine contacts are provided by residues 302–304 (GGD), I307, 332–333 (TA), M384, and A413.

It in the N-terminal section; belongs to the precorrin-2 dehydrogenase / sirohydrochlorin ferrochelatase family. This sequence in the C-terminal section; belongs to the precorrin methyltransferase family.

It catalyses the reaction uroporphyrinogen III + 2 S-adenosyl-L-methionine = precorrin-2 + 2 S-adenosyl-L-homocysteine + H(+). The catalysed reaction is precorrin-2 + NAD(+) = sirohydrochlorin + NADH + 2 H(+). It carries out the reaction siroheme + 2 H(+) = sirohydrochlorin + Fe(2+). Its pathway is cofactor biosynthesis; adenosylcobalamin biosynthesis; precorrin-2 from uroporphyrinogen III: step 1/1. The protein operates within cofactor biosynthesis; adenosylcobalamin biosynthesis; sirohydrochlorin from precorrin-2: step 1/1. It functions in the pathway porphyrin-containing compound metabolism; siroheme biosynthesis; precorrin-2 from uroporphyrinogen III: step 1/1. It participates in porphyrin-containing compound metabolism; siroheme biosynthesis; siroheme from sirohydrochlorin: step 1/1. Its pathway is porphyrin-containing compound metabolism; siroheme biosynthesis; sirohydrochlorin from precorrin-2: step 1/1. Functionally, multifunctional enzyme that catalyzes the SAM-dependent methylations of uroporphyrinogen III at position C-2 and C-7 to form precorrin-2 via precorrin-1. Then it catalyzes the NAD-dependent ring dehydrogenation of precorrin-2 to yield sirohydrochlorin. Finally, it catalyzes the ferrochelation of sirohydrochlorin to yield siroheme. This Pseudoalteromonas atlantica (strain T6c / ATCC BAA-1087) protein is Siroheme synthase.